The sequence spans 443 residues: Crinkler effector protein 161 (443 aa).

Positions 1 to 17 are cleaved as a signal peptide; the sequence is MVKLSCVIVGVPGDPFQ. An LQLFLAK domain region spans residues 18–56; that stretch reads VEIDEICELVAGLKDAIKKEKPDSIKCDADKLQLFKAAK. Residues 57 to 126 form a DWL domain region; it reads EDRTFSASGA…GMESPSISQI (70 aa). An HVLVXXP motif motif is present at residues 127-133; that stretch reads HVLVVLP. The tract at residues 134-439 is effector domain; that stretch reads EDSESEGGTS…RSMPGYCCAN (306 aa). Short sequence motifs (nuclear localization signal) lie at residues 161–170 and 384–393; these read ADKKRKRYWH and HQPLKRLKLS.

It belongs to the Crinkler effector family.

It is found in the secreted. The protein localises to the host nucleus. Functionally, secreted effector that exhibits strong cell death suppression activity and suppresses cell death induced by a variety of effectors including CRN63, Avh241 and Avr3a. Protects host plants from biotic and abiotic stresses such as salinity and drought by up-regulation of many defense-related genes, including ABC transporters, Cytochrome P450 monooxygenases and receptor-like kinases (RLKs). Also enhances resistance to Phytophtora pathogens. The protein is Crinkler effector protein 161 of Phytophthora sojae (strain P6497) (Soybean stem and root rot agent).